The chain runs to 153 residues: Transcriptional repressor NrdR (153 aa).

A zinc finger spans residues 3 to 33 (CPYCNYKESKVIDSRHTDLKSIRRRRECESC). The 91-residue stretch at 48-138 (LMVIKKDNSR…VYRQFKDINT (91 aa)) folds into the ATP-cone domain.

The protein belongs to the NrdR family. It depends on Zn(2+) as a cofactor.

Negatively regulates transcription of bacterial ribonucleotide reductase nrd genes and operons by binding to NrdR-boxes. The chain is Transcriptional repressor NrdR from Clostridioides difficile (strain 630) (Peptoclostridium difficile).